A 661-amino-acid polypeptide reads, in one-letter code: Acyl-coenzyme A oxidase acox-1.2 (661 aa).

FAD-binding positions include 147–150 (YAQT), 155–156 (GS), and G189. Residues 283 to 286 (KIGY) and R293 contribute to the substrate site. FAD-binding positions include R318 and 338 to 341 (QQHR). Residues H340, S390, H394, and Q402 each contribute to the ATP site. FAD is bound at residue G409. Position 431 to 432 (431 to 432 (YE)) interacts with substrate. The active-site Proton acceptor is E432. FAD is bound at residue E434. ATP contacts are provided by residues 525–528 (RASR) and Y573. A Microbody targeting signal motif is present at residues 659 to 661 (AKL).

The protein belongs to the acyl-CoA oxidase family. Homodimer. Forms a heterodimer with acox-1.1. Requires FAD as cofactor.

The protein localises to the peroxisome. The enzyme catalyses asc-omegaC5-CoA + O2 = asc-omegaDeltaC5-CoA + H2O2. Its pathway is lipid metabolism; peroxisomal fatty acid beta-oxidation. Its activity is regulated as follows. Activated by ATP. ATP binding leads to a conformational change that promotes FAD cofactor binding and enzyme activity. ATP binding likely occurs during acox-1.2 folding and/or dimer formation. The preference for processing substrates with shorter fatty acid chains is likely due to the closed conformation of the active site. Involved in the first step of peroxisomal beta-oxidation by catalyzing the desaturation of fatty acid-derived side chains of ascaroside pheromones, which regulates development and behavior. Specifically, shortens ascarosides with 5-carbon omega side chain (asc-omega-C5). Does not shorten indol-3-carbonyl(IC)-ascaroside with 7-carbon or 9-carbon side chains. Does not catalyze the desaturation of fatty acids or hydroxylated fatty acids. This chain is Acyl-coenzyme A oxidase acox-1.2, found in Caenorhabditis elegans.